The following is a 137-amino-acid chain: NADH-quinone oxidoreductase subunit A (137 aa).

3 helical membrane passes run 12–32, 66–86, and 95–115; these read WGFA…LGLS, FYLV…LFAW, and WTGF…LVYL.

Belongs to the complex I subunit 3 family. As to quaternary structure, NDH-1 is composed of 13 different subunits. Subunits NuoA, H, J, K, L, M, N constitute the membrane sector of the complex.

It localises to the cell inner membrane. The enzyme catalyses a quinone + NADH + 5 H(+)(in) = a quinol + NAD(+) + 4 H(+)(out). In terms of biological role, NDH-1 shuttles electrons from NADH, via FMN and iron-sulfur (Fe-S) centers, to quinones in the respiratory chain. The immediate electron acceptor for the enzyme in this species is believed to be ubiquinone. Couples the redox reaction to proton translocation (for every two electrons transferred, four hydrogen ions are translocated across the cytoplasmic membrane), and thus conserves the redox energy in a proton gradient. The sequence is that of NADH-quinone oxidoreductase subunit A from Pseudomonas putida (strain ATCC 700007 / DSM 6899 / JCM 31910 / BCRC 17059 / LMG 24140 / F1).